The chain runs to 478 residues: Kynurenine 3-monooxygenase (478 aa).

FAD contacts are provided by residues Val19, 37–40, and Ala57; that span reads YEAR. Arg85 and Tyr99 together coordinate L-kynurenine. Residues Arg111, Leu136, Thr172, Asp304, and 317–318 each bind FAD; that span reads MN. L-kynurenine contacts are provided by Asn363 and Tyr398. Transmembrane regions (helical) follow at residues 385-404 and 425-445; these read FLHA…VAFT and GLFV…VHHL.

This sequence belongs to the aromatic-ring hydroxylase family. KMO subfamily. The cofactor is FAD. As to expression, highest activity in liver and kidney. Low activity in spleen, stomach, intestinal tract, esophagus, heart and lung.

Its subcellular location is the mitochondrion outer membrane. It carries out the reaction L-kynurenine + NADPH + O2 + H(+) = 3-hydroxy-L-kynurenine + NADP(+) + H2O. The protein operates within cofactor biosynthesis; NAD(+) biosynthesis; quinolinate from L-kynurenine: step 1/3. Catalyzes the hydroxylation of L-kynurenine (L-Kyn) to form 3-hydroxy-L-kynurenine (L-3OHKyn). Required for synthesis of quinolinic acid, a neurotoxic NMDA receptor antagonist and potential endogenous inhibitor of NMDA receptor signaling in axonal targeting, synaptogenesis and apoptosis during brain development. Quinolinic acid may also affect NMDA receptor signaling in pancreatic beta cells, osteoblasts, myocardial cells, and the gastrointestinal tract. The sequence is that of Kynurenine 3-monooxygenase from Rattus norvegicus (Rat).